Consider the following 490-residue polypeptide: Protein nucleotidyltransferase YdiU (490 aa).

Positions 86, 88, 89, 109, 121, 122, 172, and 179 each coordinate ATP. The active-site Proton acceptor is the Asp248. Residues Asn249 and Asp258 each coordinate Mg(2+). An ATP-binding site is contributed by Asp258.

It belongs to the SELO family. Requires Mg(2+) as cofactor. It depends on Mn(2+) as a cofactor.

The enzyme catalyses L-seryl-[protein] + ATP = 3-O-(5'-adenylyl)-L-seryl-[protein] + diphosphate. The catalysed reaction is L-threonyl-[protein] + ATP = 3-O-(5'-adenylyl)-L-threonyl-[protein] + diphosphate. It catalyses the reaction L-tyrosyl-[protein] + ATP = O-(5'-adenylyl)-L-tyrosyl-[protein] + diphosphate. It carries out the reaction L-histidyl-[protein] + UTP = N(tele)-(5'-uridylyl)-L-histidyl-[protein] + diphosphate. The enzyme catalyses L-seryl-[protein] + UTP = O-(5'-uridylyl)-L-seryl-[protein] + diphosphate. The catalysed reaction is L-tyrosyl-[protein] + UTP = O-(5'-uridylyl)-L-tyrosyl-[protein] + diphosphate. Functionally, nucleotidyltransferase involved in the post-translational modification of proteins. It can catalyze the addition of adenosine monophosphate (AMP) or uridine monophosphate (UMP) to a protein, resulting in modifications known as AMPylation and UMPylation. This is Protein nucleotidyltransferase YdiU from Rhizobium meliloti (strain 1021) (Ensifer meliloti).